The chain runs to 427 residues: Serine hydroxymethyltransferase (427 aa).

(6S)-5,6,7,8-tetrahydrofolate-binding positions include L118 and 122 to 124; that span reads GHL. K227 carries the N6-(pyridoxal phosphate)lysine modification. Position 351 to 353 (351 to 353) interacts with (6S)-5,6,7,8-tetrahydrofolate; it reads SPF.

It belongs to the SHMT family. In terms of assembly, homodimer. Requires pyridoxal 5'-phosphate as cofactor.

It localises to the cytoplasm. The enzyme catalyses (6R)-5,10-methylene-5,6,7,8-tetrahydrofolate + glycine + H2O = (6S)-5,6,7,8-tetrahydrofolate + L-serine. The protein operates within one-carbon metabolism; tetrahydrofolate interconversion. Its pathway is amino-acid biosynthesis; glycine biosynthesis; glycine from L-serine: step 1/1. Functionally, catalyzes the reversible interconversion of serine and glycine with tetrahydrofolate (THF) serving as the one-carbon carrier. This reaction serves as the major source of one-carbon groups required for the biosynthesis of purines, thymidylate, methionine, and other important biomolecules. Also exhibits THF-independent aldolase activity toward beta-hydroxyamino acids, producing glycine and aldehydes, via a retro-aldol mechanism. This chain is Serine hydroxymethyltransferase, found in Thermotoga petrophila (strain ATCC BAA-488 / DSM 13995 / JCM 10881 / RKU-1).